The sequence spans 508 residues: Histone acetyltransferase esa1 (508 aa).

The Tudor-knot domain occupies Ile-27–Leu-80. The segment at Val-84–Pro-150 is disordered. Polar residues predominate over residues Thr-119 to Gly-131. Residues His-220–Pro-496 form the MYST-type HAT domain. The segment at Val-253–Leu-278 adopts a C2HC MYST-type; degenerate zinc-finger fold. Positions Arg-303 to Tyr-324 match the ESA1-RPD3 motif motif. Lys-320 is subject to N6-acetyllysine; by autocatalysis. Acetyl-CoA contacts are provided by residues Ala-361–Thr-365 and Gln-370–Arg-376. The active-site Proton donor/acceptor is the Glu-396. Ser-400 contacts acetyl-CoA.

It belongs to the MYST (SAS/MOZ) family. As to quaternary structure, component of the NuA4 histone acetyltransferase complex. Autoacetylation at Lys-320 is required for proper function.

The protein localises to the nucleus. Its subcellular location is the chromosome. The catalysed reaction is L-lysyl-[histone] + acetyl-CoA = N(6)-acetyl-L-lysyl-[histone] + CoA + H(+). The enzyme catalyses L-lysyl-[protein] + acetyl-CoA = N(6)-acetyl-L-lysyl-[protein] + CoA + H(+). It catalyses the reaction 2-hydroxyisobutanoyl-CoA + L-lysyl-[protein] = N(6)-(2-hydroxyisobutanoyl)-L-lysyl-[protein] + CoA + H(+). It carries out the reaction (2E)-butenoyl-CoA + L-lysyl-[protein] = N(6)-(2E)-butenoyl-L-lysyl-[protein] + CoA + H(+). In terms of biological role, catalytic component of the NuA4 histone acetyltransferase (HAT) complex which is involved in epigenetic transcriptional activation of selected genes principally by acetylation of nucleosomal histones H4, H3, H2B, H2A and H2A variant H2A.Z. Acetylates histone H4 to form H4K5ac, H4K8ac, H4K12ac and H4K16ac, histone H3 to form H3K14ac, and histone H2A to form H2AK4ac and H2AK7ac. The NuA4 complex is involved in the DNA damage response and is required for chromosome segregation. The NuA4 complex plays a direct role in repair of DNA double-strand breaks (DSBs) through homologous recombination. Recruitment to promoters depends on H3K4me. Also acetylates non-histone proteins. In addition to protein acetyltransferase, can use different acyl-CoA substrates, such as 2-hydroxyisobutanoyl-CoA (2-hydroxyisobutyryl-CoA) or (2E)-butenoyl-CoA (crotonyl-CoA), and is able to mediate protein 2-hydroxyisobutyrylation and crotonylation, respectively. This Emericella nidulans (strain FGSC A4 / ATCC 38163 / CBS 112.46 / NRRL 194 / M139) (Aspergillus nidulans) protein is Histone acetyltransferase esa1 (esa1).